A 977-amino-acid polypeptide reads, in one-letter code: Short transient receptor potential channel 4 (977 aa).

The Cytoplasmic portion of the chain corresponds to 1 to 324; the sequence is MAQFYYKRNV…YDEFPGWRRR (324 aa). ANK repeat units lie at residues 29–60, 71–93, 96–118, and 141–165; these read LSPS…IYFK, RTAL…LSFN, VGDA…LLNH, and PDIT…VQKG. Zn(2+)-binding residues include histidine 172, cysteine 176, cysteine 178, and cysteine 181. Residues 223–260 are a coiled coil; sequence LSWELQELSKVENEFKSEYEELSRQCKQFAKDLLDQTR. Positions 325-359 form an intramembrane region, discontinuously helical; the sequence is HWAVKMVTCFIIGLLFPVFSVCYLIAPKSPLGLFI. Residues 360–362 are Cytoplasmic-facing; the sequence is RKP. The helical transmembrane segment at 363 to 383 threads the bilayer; sequence FIKFICHTASYLTFLFLLLLA. At 384 to 403 the chain is on the extracellular side; the sequence is SQHIDRSDLNRQGPPPTIVE. A helical membrane pass occupies residues 404–418; that stretch reads WMILPWVLGFIWGEI. Ca(2+) contacts are provided by glutamate 417, glutamine 420, asparagine 435, and aspartate 438. Over 419–432 the chain is Cytoplasmic; sequence KQMWDGGLQDYIHD. Residues 433 to 453 form a helical membrane-spanning segment; the sequence is WWNLMDFVMNSLYLATISLKI. The Extracellular segment spans residues 454 to 475; sequence VAFVKYSALNPRESWDMWHPTL. Residues 476-498 traverse the membrane as a helical segment; that stretch reads VAEALFAIANIFSSLRLISLFTA. Topologically, residues 499-511 are cytoplasmic; that stretch reads NSHLGPLQISLGR. The chain crosses the membrane as a helical span at residues 512–534; that stretch reads MLLDILKFLFIYCLVLLAFANGL. Topologically, residues 535 to 599 are extracellular; that stretch reads NQLYFYYEET…HEFTDFVGAT (65 aa). Cysteine 549 and cysteine 554 are oxidised to a cystine. Residues 600-620 traverse the membrane as a helical segment; it reads MFGTYNVISLVVLLNMLIAMM. An interaction with ITPR1, ITPR2 and ITPR3 region spans residues 615-977; it reads MLIAMMNNSY…AHEDYVTTRL (363 aa). Topologically, residues 621–977 are cytoplasmic; that stretch reads NNSYQLIADH…AHEDYVTTRL (357 aa). Positions 767 to 790 are disordered; sequence AASSASSADSDEKSHSEGNGKDKR. Residues 776-787 are compositionally biased toward basic and acidic residues; that stretch reads SDEKSHSEGNGK. 2 positions are modified to phosphotyrosine; by FYN: tyrosine 959 and tyrosine 972. The tract at residues 975–977 is PDZ-binding domain; it reads TRL.

This sequence belongs to the transient receptor (TC 1.A.4) family. STrpC subfamily. TRPC4 sub-subfamily. As to quaternary structure, homotetramer. Heterotetramer with TRPC1 and/or TRPC5. Forms a heteromeric ion channel with TRPC1, with a 1:3 TRPC1:TRPC4 stoichiometry. Interacts with TRPC4AP. Isoform alpha but not isoform beta interacts with ITPR1, ITPR2 and ITPR3. Interacts with NHERF1. Interacts with MX1 and RNF24. Interacts (via CIRB domain) with SESTD1 (via the spectrin 1 repeat) and SPTBN5 (via C-terminus). Interacts with CDH5 and CTNNB1. Interacts (via protein 4.1-binding domain) with EPB41L2. Interacts with PLSCR1.

Its subcellular location is the cell membrane. It catalyses the reaction Ca(2+)(in) = Ca(2+)(out). It carries out the reaction Na(+)(in) = Na(+)(out). The catalysed reaction is Li(+)(in) = Li(+)(out). The enzyme catalyses Cs(+)(in) = Cs(+)(out). May be operated by a phosphatidylinositol second messenger system activated by receptor tyrosine kinases or G-protein coupled receptors. May be activated by intracellular calcium store depletion. Forms a receptor-activated non-selective calcium permeant cation channel. Acts as a cell-cell contact-dependent endothelial calcium entry channel. Forms a homomeric ion channel or a heteromeric ion channel with TRPC1; the heteromeric ion channel has reduced calcium permeability compared to the homomeric channel. Also permeable to monovalent ions including sodium, lithium and cesium ions. Its function is as follows. Forms a non-selective a receptor-activated calcium permeant cation channel. Probably is operated by a phosphatidylinositol second messenger system activated by receptor tyrosine kinases or G-protein coupled receptors. In Rattus norvegicus (Rat), this protein is Short transient receptor potential channel 4 (Trpc4).